We begin with the raw amino-acid sequence, 97 residues long: Co-chaperonin GroES (97 aa).

This sequence belongs to the GroES chaperonin family. As to quaternary structure, heptamer of 7 subunits arranged in a ring. Interacts with the chaperonin GroEL.

It is found in the cytoplasm. Together with the chaperonin GroEL, plays an essential role in assisting protein folding. The GroEL-GroES system forms a nano-cage that allows encapsulation of the non-native substrate proteins and provides a physical environment optimized to promote and accelerate protein folding. GroES binds to the apical surface of the GroEL ring, thereby capping the opening of the GroEL channel. This is Co-chaperonin GroES from Sodalis glossinidius (strain morsitans).